Here is a 296-residue protein sequence, read N- to C-terminus: Malate--CoA ligase subunit alpha (296 aa).

Residues 17 to 20 (TGDK), lysine 43, and 96 to 98 (ITD) contribute to the CoA site. The active-site Tele-phosphohistidine intermediate is the histidine 251.

It belongs to the succinate/malate CoA ligase alpha subunit family. In terms of assembly, heterotetramer of two alpha and two beta subunits.

The enzyme catalyses (S)-malate + ATP + CoA = (S)-malyl-CoA + ADP + phosphate. It functions in the pathway one-carbon metabolism; formaldehyde assimilation via serine pathway. The polypeptide is Malate--CoA ligase subunit alpha (mtkB) (Methylorubrum extorquens (strain ATCC 14718 / DSM 1338 / JCM 2805 / NCIMB 9133 / AM1) (Methylobacterium extorquens)).